The chain runs to 1308 residues: Receptor tyrosine-protein kinase erbB-4 (1308 aa).

The N-terminal stretch at 1–25 (MKLATGLWVWGSLLMAAGTVQPSAS) is a signal peptide. The Extracellular segment spans residues 26–652 (QSVCAGTENK…TLPQHARTPL (627 aa)). Cys-29 and Cys-56 are oxidised to a cystine. N-linked (GlcNAc...) asparagine glycosylation is found at Asn-138, Asn-174, and Asn-181. Cystine bridges form between Cys-156/Cys-186, Cys-189/Cys-197, Cys-193/Cys-205, Cys-213/Cys-221, Cys-217/Cys-229, Cys-230/Cys-238, Cys-234/Cys-246, Cys-249/Cys-258, Cys-262/Cys-289, Cys-293/Cys-304, Cys-308/Cys-323, and Cys-326/Cys-330. Asn-253 is a glycosylation site (N-linked (GlcNAc...) asparagine). N-linked (GlcNAc...) asparagine glycans are attached at residues Asn-410, Asn-473, and Asn-495. 10 disulfides stabilise this stretch: Cys-503/Cys-512, Cys-507/Cys-520, Cys-523/Cys-532, Cys-536/Cys-552, Cys-555/Cys-569, Cys-559/Cys-577, Cys-580/Cys-589, Cys-593/Cys-614, Cys-617/Cys-625, and Cys-621/Cys-633. A glycan (N-linked (GlcNAc...) asparagine) is linked at Asn-548. Asn-576 carries N-linked (GlcNAc...) asparagine glycosylation. Asn-620 carries N-linked (GlcNAc...) asparagine glycosylation. At 653–673 (IAAGVIGGLFILVIMALTFAV) the chain is embedded in the membrane. The Cytoplasmic portion of the chain corresponds to 674 to 1308 (YVRRKSIKKK…PPYRHRNTVV (635 aa)). A Nuclear localization signal motif is present at residues 676 to 684 (RRKSIKKKR). In terms of domain architecture, Protein kinase spans 718 to 985 (LKRVKVLGSG…RMARDPQRYL (268 aa)). Residues 724 to 732 (LGSGAFGTV), Lys-751, 797 to 799 (QLM), and 843 to 848 (DLAARN) contribute to the ATP site. Residue Asp-843 is the Proton acceptor of the active site. Tyr-875, Tyr-1035, and Tyr-1056 each carry phosphotyrosine; by autocatalysis. The PPxy motif 1 signature appears at 1032-1035 (PPIY). The segment at 1117–1149 (PHVQEDSSTQRYSADPTVFAPERNPRGELDEEG) is disordered. Tyr-1150, Tyr-1162, Tyr-1188, Tyr-1202, Tyr-1242, Tyr-1258, and Tyr-1284 each carry phosphotyrosine; by autocatalysis. The PPxY motif 2 signature appears at 1282–1285 (PEYL). The PDZ-binding motif lies at 1290 to 1292 (LKP).

It belongs to the protein kinase superfamily. Tyr protein kinase family. EGF receptor subfamily. As to quaternary structure, monomer in the absence of bound ligand. Homodimer or heterodimer with another ERBB family member upon ligand binding, thus forming heterotetramers. Interacts with EGFR and ERBB2. Interacts with DLG2 (via its PDZ domain), DLG3 (via its PDZ domain), DLG4 (via its PDZ domain) and SNTB2 (via its PDZ domain). Interacts with MUC1. Interacts (via its PPxy motifs) with WWOX. Interacts (via the PPxY motif 3 of isoform JM-A CYT-2) with YAP1 (via the WW domain 1 of isoform 1). Interacts (isoform JM-A CYT-1 and isoform JM-B CYT-1) with WWP1. Interacts (via its intracellular domain) with TRIM28. Interacts (via the intracellular domains of both CYT-1 and CYT-2 isoforms) with KAP1; the interaction does not phosphorylate KAP1 but represses ERBB4-mediated transcriptional activity. Interacts with PRPU, DDX23, MATR3, RBM15, ILF3, KAP1, U5S1, U2SURP, ITCH, HNRNPU, AP2A1, NULC, LEO1, WWP2, IGHG1, HXK1, GRB7 and SRRT. Interacts (phosphorylated isoform JM-A CYT-1 and isoform JM-B CYT-1) with PIK3R1. Interacts with SHC1. Interacts with GRB2. Interacts (soluble intracellular domain) with BCL2. Interacts (phosphorylated) with STAT1. Interacts with CBFA2T3. Interacts (soluble intracellular domain) with STAT5A. Isoform JM-A CYT-1 and isoform JM-A CYT-2 are processed by ADAM17. Proteolytic processing in response to ligand or 12-O-tetradecanoylphorbol-13-acetate stimulation results in the production of 120 kDa soluble receptor forms and intermediate membrane-anchored 80 kDa fragments (m80HER4), which are further processed by a presenilin-dependent gamma-secretase to release a cytoplasmic intracellular domain (E4ICD; E4ICD1/s80Cyt1 or E4ICD2/s80Cyt2, depending on the isoform). Membrane-anchored 80 kDa fragments of the processed isoform JM-A CYT-1 are more readily degraded by the proteasome than fragments of isoform JM-A CYT-2, suggesting a prevalence of E4ICD2 over E4ICD1. Isoform JM-B CYT-1 and isoform JM-B CYT-2 lack the ADAM17 cleavage site and are not processed by ADAM17, precluding further processing by gamma-secretase. In terms of processing, autophosphorylated on tyrosine residues in response to ligand binding. Autophosphorylation occurs in trans, i.e. one subunit of the dimeric receptor phosphorylates tyrosine residues on the other subunit. Ligands trigger phosphorylation at specific tyrosine residues, thereby creating binding sites for scaffold proteins and effectors. Constitutively phosphorylated at a basal level when overexpressed in heterologous systems; ligand binding leads to increased phosphorylation. Phosphorylation at Tyr-1035 is important for interaction with STAT1. Phosphorylation at Tyr-1056 is important for interaction with PIK3R1. Phosphorylation at Tyr-1242 is important for interaction with SHC1. Phosphorylation at Tyr-1188 may also contribute to the interaction with SHC1. Isoform JM-A CYT-2 is constitutively phosphorylated on tyrosine residues in a ligand-independent manner. E4ICD2 but not E4ICD1 is phosphorylated on tyrosine residues. Post-translationally, ubiquitinated. During mitosis, the ERBB4 intracellular domain is ubiquitinated by the APC/C complex and targeted to proteasomal degradation. Isoform JM-A CYT-1 and isoform JM-B CYT-1 are ubiquitinated by WWP1. The ERBB4 intracellular domain (E4ICD1) is ubiquitinated, and this involves NEDD4. In terms of tissue distribution, isoform JM-A CYT-2 and isoform JM-B CYT-2 are expressed in cerebellum, cerebral cortex, spinal cord, medulla oblongata and eye, but the kidney expresses solely isoform JM-A CYT-2 and the heart solely isoform JM-B CYT-2.

The protein localises to the cell membrane. Its subcellular location is the nucleus. It localises to the mitochondrion. It catalyses the reaction L-tyrosyl-[protein] + ATP = O-phospho-L-tyrosyl-[protein] + ADP + H(+). With respect to regulation, binding of a cognate ligand leads to dimerization and activation by autophosphorylation on tyrosine residues. In vitro kinase activity is increased by Mg(2+). Functionally, tyrosine-protein kinase that plays an essential role as cell surface receptor for neuregulins and EGF family members and regulates development of the heart, the central nervous system and the mammary gland, gene transcription, cell proliferation, differentiation, migration and apoptosis. Required for normal cardiac muscle differentiation during embryonic development, and for postnatal cardiomyocyte proliferation. Required for normal development of the embryonic central nervous system, especially for normal neural crest cell migration and normal axon guidance. Required for mammary gland differentiation, induction of milk proteins and lactation. Acts as cell-surface receptor for the neuregulins NRG1, NRG2, NRG3 and NRG4 and the EGF family members BTC, EREG and HBEGF. Ligand binding triggers receptor dimerization and autophosphorylation at specific tyrosine residues that then serve as binding sites for scaffold proteins and effectors. Ligand specificity and signaling is modulated by alternative splicing, proteolytic processing, and by the formation of heterodimers with other ERBB family members, thereby creating multiple combinations of intracellular phosphotyrosines that trigger ligand- and context-specific cellular responses. Mediates phosphorylation of SHC1 and activation of the MAP kinases MAPK1/ERK2 and MAPK3/ERK1. Isoform JM-A CYT-1 and isoform JM-B CYT-1 phosphorylate PIK3R1, leading to the activation of phosphatidylinositol 3-kinase and AKT1 and protect cells against apoptosis. Isoform JM-A CYT-1 and isoform JM-B CYT-1 mediate reorganization of the actin cytoskeleton and promote cell migration in response to NRG1. Isoform JM-A CYT-2 and isoform JM-B CYT-2 lack the phosphotyrosine that mediates interaction with PIK3R1, and hence do not phosphorylate PIK3R1, do not protect cells against apoptosis, and do not promote reorganization of the actin cytoskeleton and cell migration. Proteolytic processing of isoform JM-A CYT-1 and isoform JM-A CYT-2 gives rise to the corresponding soluble intracellular domains (4ICD) that translocate to the nucleus, promote nuclear import of STAT5A, activation of STAT5A, mammary epithelium differentiation, cell proliferation and activation of gene expression. The ERBB4 soluble intracellular domains (4ICD) colocalize with STAT5A at the CSN2 promoter to regulate transcription of milk proteins during lactation. The ERBB4 soluble intracellular domains can also translocate to mitochondria and promote apoptosis. This Mus musculus (Mouse) protein is Receptor tyrosine-protein kinase erbB-4 (Erbb4).